The following is a 430-amino-acid chain: Histidine--tRNA ligase (430 aa).

It belongs to the class-II aminoacyl-tRNA synthetase family. In terms of assembly, homodimer.

It is found in the cytoplasm. It catalyses the reaction tRNA(His) + L-histidine + ATP = L-histidyl-tRNA(His) + AMP + diphosphate + H(+). In Acinetobacter baumannii (strain SDF), this protein is Histidine--tRNA ligase.